The primary structure comprises 64 residues: UPF0370 protein YE1145 (64 aa).

A helical transmembrane segment spans residues Trp-3–Ile-23. The segment at Ser-36 to Lys-64 is disordered.

The protein belongs to the UPF0370 family.

It is found in the cell membrane. The chain is UPF0370 protein YE1145 from Yersinia enterocolitica serotype O:8 / biotype 1B (strain NCTC 13174 / 8081).